The primary structure comprises 636 residues: Endoglucanase 4 (636 aa).

A signal peptide spans 1-25 (MTRRWSFLVQCFTFKKKEGVRSRYM). The Nucleophile role is filled by Asp-82. Active-site residues include His-400, Asp-438, and Glu-447. The CBM3 domain maps to 478–635 (KVEDEFFVEA…GDLVFGTLPN (158 aa)).

This sequence belongs to the glycosyl hydrolase 9 (cellulase E) family.

The protein localises to the secreted. It catalyses the reaction Endohydrolysis of (1-&gt;4)-beta-D-glucosidic linkages in cellulose, lichenin and cereal beta-D-glucans.. This is Endoglucanase 4 from Bacillus sp. (strain KSM-522).